The sequence spans 159 residues: Cyclic pyranopterin monophosphate synthase (159 aa).

Substrate contacts are provided by residues 76-78 and 114-115; these read LCH and ME. Residue D129 is part of the active site.

It belongs to the MoaC family. As to quaternary structure, homohexamer; trimer of dimers.

The enzyme catalyses (8S)-3',8-cyclo-7,8-dihydroguanosine 5'-triphosphate = cyclic pyranopterin phosphate + diphosphate. It participates in cofactor biosynthesis; molybdopterin biosynthesis. In terms of biological role, catalyzes the conversion of (8S)-3',8-cyclo-7,8-dihydroguanosine 5'-triphosphate to cyclic pyranopterin monophosphate (cPMP). In Shewanella oneidensis (strain ATCC 700550 / JCM 31522 / CIP 106686 / LMG 19005 / NCIMB 14063 / MR-1), this protein is Cyclic pyranopterin monophosphate synthase.